A 391-amino-acid polypeptide reads, in one-letter code: Phosphoglycerate kinase (391 aa).

Substrate contacts are provided by residues 21 to 23, Arg36, 59 to 62, Arg113, and Arg146; these read DLN and HLGR. ATP contacts are provided by residues Lys197, Glu319, and 345 to 348; that span reads GGDT.

The protein belongs to the phosphoglycerate kinase family. As to quaternary structure, monomer.

It is found in the cytoplasm. It catalyses the reaction (2R)-3-phosphoglycerate + ATP = (2R)-3-phospho-glyceroyl phosphate + ADP. Its pathway is carbohydrate degradation; glycolysis; pyruvate from D-glyceraldehyde 3-phosphate: step 2/5. This Xanthomonas axonopodis pv. citri (strain 306) protein is Phosphoglycerate kinase.